The chain runs to 312 residues: DNA-directed RNA polymerase subunit alpha (312 aa).

An alpha N-terminal domain (alpha-NTD) region spans residues 1 to 229; sequence MLQYQIDRID…ELFQPLATVT (229 aa). The segment at 246 to 312 is alpha C-terminal domain (alpha-CTD); that stretch reads IPLEELNLSV…ISIPQSRTSV (67 aa).

It belongs to the RNA polymerase alpha chain family. As to quaternary structure, in cyanobacteria the RNAP catalytic core is composed of 2 alpha, 1 beta, 1 beta', 1 gamma and 1 omega subunit. When a sigma factor is associated with the core the holoenzyme is formed, which can initiate transcription.

The enzyme catalyses RNA(n) + a ribonucleoside 5'-triphosphate = RNA(n+1) + diphosphate. DNA-dependent RNA polymerase catalyzes the transcription of DNA into RNA using the four ribonucleoside triphosphates as substrates. This chain is DNA-directed RNA polymerase subunit alpha, found in Prochlorococcus marinus subsp. pastoris (strain CCMP1986 / NIES-2087 / MED4).